We begin with the raw amino-acid sequence, 853 residues long: MKSLSLTWITAVAVVLYLVQRYVRSYWRLKDIPGPVLAKLTDLQRVWWVKTGRAHEFHRDMHAMYGPIVRFGPNMVSVSDPRVIPTIYPSRPGFPKGDFYRTQKPYTRNKGAMPAVFNTQDEDLHKQLRSPIASLYSMTNVVRLEPLVDETLTVLSKQLDERFVGTNDKPFDLGDWLQYFAFDSMGTLTFSRRYGFLEQGRDMHGILQEIWNFMTRVAVMGQIPWFDEIWNKNSFITLFKRPTGFGVLKVVDNFISQRVSSRENDEKADEKDMLSQFLDIQASNPHSIMPWAPRAWTFSNVMAGSDSTANVMRTMMYNLLVDRDTLRSLRAELLEAENSNGLSRSLPSWDGVRSLPYLDACVLEALRLHPPFCLPFERVVPEGGITVCETYLPAGTVVGISPYLANRDKQTFGDDADKWRPSRWLDLSREDRVKLENSILTFGAGRRTCLGKNIAILEIKKLFPMLLLNYEIEIVNPENYQTTNAWFFRQWGLQAVIRKLPAPERDDTIEQKASIPPALNIPPSSSTVEVRIIDSGTLLDLRPDLFWTPDLPGLLKVTAPTYCFLISNGTRHVLFDLAVRQDWENLPPSIVAMIKSQTVIQEPRNISDVLDSDESSLGVRSKDIEAIIWSHAHFDHIGDPSTFPPSTELVVGPGIRDTHWPGFPTNPDAINLNTDIQGRNVREISFEKTQKGATKIGSFDAVDYFGDGSFYLLDAAGHSVGHIGALARVTTSPVSFVFMGGDSCHHAGVLRPTKYLPCPLDSGDTSLPCKSDSVFTLSPALPTDYTAALRTVENIKELDACEDVFVVLAHDATLKGKVDFYPSKINDWKAKEYGKKTKWLFYKDIENSIEGQK.

Over 1-6 (MKSLSL) the chain is Lumenal. Residues 7-29 (TWITAVAVVLYLVQRYVRSYWRL) traverse the membrane as a helical segment. The Cytoplasmic segment spans residues 30-853 (KDIPGPVLAK…DIENSIEGQK (824 aa)). Cys449 contacts heme.

Belongs to the cytochrome P450 family. Heme serves as cofactor.

The protein localises to the endoplasmic reticulum membrane. It carries out the reaction 5-methylorsellinate + reduced [NADPH--hemoprotein reductase] + O2 = 4,6-dihydroxy-2-(hydroxymethyl)-3-methylbenzoate + oxidized [NADPH--hemoprotein reductase] + H2O + H(+). The catalysed reaction is 4,6-dihydroxy-2-(hydroxymethyl)-3-methylbenzoate + H(+) = 5,7-dihydroxy-4-methylphthalide + H2O. The protein operates within secondary metabolite biosynthesis; terpenoid biosynthesis. Functionally, cytochrome P450 monooxygenase; part of the gene cluster that mediates the biosynthesis of mycophenolic acid (MPA), the first isolated antibiotic natural product in the world obtained from a culture of Penicillium brevicompactum in 1893. MpaDE is an endoplasmic reticulum-bound enzyme that catalyzes the conversion of 5-methylorsellinic acid (5MOA) into the phthalide compound 5,7-dihydroxy-4,6-dimethylphthalide (DHMP). MpaDE first catalyzes hydroxylation of 5-MOA to 4,6-dihydroxy-2-(hydroxymethyl)-3-methylbenzoic acid (DHMB), and then acts as a lactone synthase that catalyzes the ring closure to convert DHMB into DHMP. The first step of the pathway is the synthesis of 5-methylorsellinic acid (5MOA) by the cytosolic polyketide synthase mpaC. 5MOA is then converted to the phthalide compound 5,7-dihydroxy-4,6-dimethylphthalide (DHMP) by the endoplasmic reticulum-bound cytochrome P450 monooxygenase mpaDE. MpaDE first catalyzes hydroxylation of 5-MOA to 4,6-dihydroxy-2-(hydroxymethyl)-3-methylbenzoic acid (DHMB). MpaDE then acts as a lactone synthase that catalyzes the ring closure to convert DHMB into DHMP. The next step is the prenylation of DHMP by the Golgi apparatus-associated prenyltransferase mpaA to yield farnesyl-DHMP (FDHMP). The ER-bound oxygenase mpaB then mediates the oxidative cleavage the C19-C20 double bond in FDHMP to yield FDHMP-3C via a mycophenolic aldehyde intermediate. The O-methyltransferase mpaG catalyzes the methylation of FDHMP-3C to yield MFDHMP-3C. After the cytosolic methylation of FDHMP-3C, MFDHMP-3C enters into peroxisomes probably via free diffusion due to its low molecular weight. Upon a peroxisomal CoA ligation reaction, catalyzed by a beta-oxidation component enzyme acyl-CoA ligase ACL891, MFDHMP-3C-CoA would then be restricted to peroxisomes for the following beta-oxidation pathway steps. The peroxisomal beta-oxidation machinery than converts MFDHMP-3C-CoA into MPA_CoA, via a beta-oxidation chain-shortening process. Finally mpaH acts as a peroxisomal acyl-CoA hydrolase with high substrate specificity toward MPA-CoA to release the final product MPA. This is Cytochrome P450 monooxygenase mpaDE from Penicillium brevicompactum.